The sequence spans 23 residues: Pseudin-4 (23 aa).

Expressed by the skin glands.

The protein localises to the secreted. In terms of biological role, possesses antifungal activity against C.albicans and is also active against E.coli and S.aureus. This is Pseudin-4 from Pseudis paradoxa (Paradoxical frog).